The following is a 137-amino-acid chain: Methylmalonyl-CoA decarboxylase subunit delta (137 aa).

A helical membrane pass occupies residues 30-50 (VTVVLGMGITVVALIFLMYII).

This sequence belongs to the OadG family. The methylmalonyl-CoA decarboxylase is composed of four subunits: the carboxyltransferase alpha subunit (MmdA), the tunnel beta subunit (MmdB), the biotin-containing gamma subunit (MmdC) and the delta subunit (MmdD).

Its subcellular location is the cell membrane. The catalysed reaction is (S)-methylmalonyl-CoA + Na(+)(in) + H(+)(out) = propanoyl-CoA + Na(+)(out) + CO2. Functionally, subunit of the sodium ion pump methylmalonyl-CoA decarboxylase, which converts the chemical energy of a decarboxylation reaction into an electrochemical gradient of Na(+) ions across the cytoplasmic membrane, thereby creating a sodium ion motive force that is used for ATP synthesis. The delta subunit is required for catalytic activity as well as for the proper assembly of the individual subunits to an enzyme complex. This is Methylmalonyl-CoA decarboxylase subunit delta from Propionigenium modestum.